A 292-amino-acid polypeptide reads, in one-letter code: CCR4-NOT transcription complex subunit 8 (292 aa).

The a divalent metal cation site is built by aspartate 40, glutamate 42, aspartate 161, and aspartate 230.

It belongs to the CAF1 family. Component of the CCR4-NOT complex; distinct complexes seem to exist that differ in the participation of probably mutually exclusive catalytic subunits; the complex contains two deadenylase subunits, CNOT6 or CNOT6L, and CNOT7 or CNOT8. In the complex interacts directly with CNOT1. Interacts with BTG1, BTG2 and TOB1. Interacts with BTG4.

It localises to the cytoplasm. Its subcellular location is the nucleus. It carries out the reaction Exonucleolytic cleavage of poly(A) to 5'-AMP.. Its function is as follows. Has 3'-5' poly(A) exoribonuclease activity for synthetic poly(A) RNA substrate. Its function seems to be partially redundant with that of CNOT7. Catalytic component of the CCR4-NOT complex which is linked to various cellular processes including bulk mRNA degradation, miRNA-mediated repression, translational repression during translational initiation and general transcription regulation. During miRNA-mediated repression the complex also seems to act as translational repressor during translational initiation. Additional complex functions may be a consequence of its influence on mRNA expression. Associates with members of the BTG family such as TOB1 and BTG2 and is required for their anti-proliferative activity. This Mus musculus (Mouse) protein is CCR4-NOT transcription complex subunit 8 (Cnot8).